Consider the following 2500-residue polypeptide: Non-reducing polyketide synthase atr1 (2500 aa).

Residues 13-260 (VFSPQSKAPK…HNPENANLAL (248 aa)) form an N-terminal acylcarrier protein transacylase domain (SAT) region. Positions 385–808 (TDAVAVVGMA…GSNSAVLLCQ (424 aa)) constitute a Ketosynthase family 3 (KS3) domain. Residues Cys557, His692, and His731 each act as for beta-ketoacyl synthase activity in the active site. Residues 908-1199 (MTFSGQSRQS…EFPERHTFLD (292 aa)) form a malonyl-CoA:ACP transacylase (MAT) domain region. Residue Ser995 is the For acyl/malonyl transferase activity of the active site. An N-terminal hotdog fold region spans residues 1286–1413 (PRLVEPRTKP…GDFGFTTQTQ (128 aa)). The 299-residue stretch at 1286–1584 (PRLVEPRTKP…FTKLPITRLE (299 aa)) folds into the PKS/mFAS DH domain. The tract at residues 1287–1583 (RLVEPRTKPS…QFTKLPITRL (297 aa)) is product template (PT) domain. His1317 functions as the Proton acceptor; for dehydratase activity in the catalytic mechanism. The tract at residues 1433-1584 (SETLKSKRAY…FTKLPITRLE (152 aa)) is C-terminal hotdog fold. Asp1495 acts as the Proton donor; for dehydratase activity in catalysis. The interval 1594-1649 (AHNTPILKSSQQDSIVSASSSSSTEHSDDDSEDDGSRSPSHSDTSVDSESEAPADN) is disordered. Residues 1602-1617 (SSQQDSIVSASSSSST) are compositionally biased toward low complexity. One can recognise a Carrier domain in the interval 1649 to 1725 (NGAAKKLKSL…RIVAPEMAAK (77 aa)). Ser1683 is modified (O-(pantetheine 4'-phosphoryl)serine). Residues 2164–2496 (KSYRIETMPY…YEFIFDVVGR (333 aa)) form a thioesterase (TE) domain region. Active-site for thioesterase activity residues include Ser2285 and Asp2434.

It carries out the reaction 6 malonyl-CoA + 2 acetyl-CoA + 2 S-adenosyl-L-methionine + 3 H(+) = 4-O-demethylbarbatate + 2 S-adenosyl-L-homocysteine + 6 CO2 + 8 CoA + H2O. The protein operates within secondary metabolite biosynthesis; terpenoid biosynthesis. Non-reducing polyketide synthase; part of the gene cluster that mediates the biosynthesis of atranorin, a depside of polyketide origin that accumulates in the cortical or medullary layers of lichen thalli. The first step in the pathway is performed by the non-reducing polyketide synthase atr1 that produces 4-O-demethylbarbatic acid composed of two 3-methylorsellinic acid (3MOA) moieties from S-adenosyl-L-methionine (SAM), acetyl-CoA and malonyl-CoA units. The pathway continues with the actions of the cytochrome P450 monooygenase atr2 that catalizes the oxidation of c-9 and the O-methyltransferase atr3 that performs the methylation of the carboxyl group to yield atranorin, via the proatranorin II and III intermediates if atr2 acts first, or the proatranorin I intermediate if atr3 acts first. This is Non-reducing polyketide synthase atr1 from Stereocaulon alpinum (Alpine snow lichen).